Here is an 85-residue protein sequence, read N- to C-terminus: DNA-directed RNA polymerase subunit omega (85 aa).

This sequence belongs to the RNA polymerase subunit omega family. The RNAP catalytic core consists of 2 alpha, 1 beta, 1 beta' and 1 omega subunit. When a sigma factor is associated with the core the holoenzyme is formed, which can initiate transcription.

The catalysed reaction is RNA(n) + a ribonucleoside 5'-triphosphate = RNA(n+1) + diphosphate. In terms of biological role, promotes RNA polymerase assembly. Latches the N- and C-terminal regions of the beta' subunit thereby facilitating its interaction with the beta and alpha subunits. In Latilactobacillus sakei subsp. sakei (strain 23K) (Lactobacillus sakei subsp. sakei), this protein is DNA-directed RNA polymerase subunit omega.